A 238-amino-acid polypeptide reads, in one-letter code: Ribonuclease PH (238 aa).

Residues arginine 86 and 124–126 (GTR) each bind phosphate.

This sequence belongs to the RNase PH family. As to quaternary structure, homohexameric ring arranged as a trimer of dimers.

The enzyme catalyses tRNA(n+1) + phosphate = tRNA(n) + a ribonucleoside 5'-diphosphate. Phosphorolytic 3'-5' exoribonuclease that plays an important role in tRNA 3'-end maturation. Removes nucleotide residues following the 3'-CCA terminus of tRNAs; can also add nucleotides to the ends of RNA molecules by using nucleoside diphosphates as substrates, but this may not be physiologically important. Probably plays a role in initiation of 16S rRNA degradation (leading to ribosome degradation) during starvation. The polypeptide is Ribonuclease PH (Phenylobacterium zucineum (strain HLK1)).